A 289-amino-acid polypeptide reads, in one-letter code: Shikimate kinase (289 aa).

84–94 (PVASGLSSSSA) contributes to the ATP binding site.

This sequence belongs to the GHMP kinase family. Archaeal shikimate kinase subfamily.

It is found in the cytoplasm. The catalysed reaction is shikimate + ATP = 3-phosphoshikimate + ADP + H(+). It participates in metabolic intermediate biosynthesis; chorismate biosynthesis; chorismate from D-erythrose 4-phosphate and phosphoenolpyruvate: step 5/7. The chain is Shikimate kinase (aroK) from Methanothermobacter thermautotrophicus (strain ATCC 29096 / DSM 1053 / JCM 10044 / NBRC 100330 / Delta H) (Methanobacterium thermoautotrophicum).